A 594-amino-acid polypeptide reads, in one-letter code: Segmentation polarity homeobox protein engrailed (594 aa).

Disordered regions lie at residues 1–64 (MALE…TRDE), 76–127 (IKQE…PASI), 141–164 (KATA…ISPG), 198–217 (HYYQ…PQRA), 231–299 (ISKS…PTGS), 387–458 (AGTG…GSEN), and 474–501 (DRPS…RPRT). Residues 22–60 (SQSPTSTTTVTMATASPVPACTTTTTTTSTSGASAASSP) are compositionally biased toward low complexity. Residues 92–112 (PHHHQHPHHHQLPHHPHHQHH) are compositionally biased toward basic residues. Residues 151–164 (HPQPPAIREPISPG) are compositionally biased toward pro residues. Positions 237-247 (LCSSNGSSSAT) are enriched in polar residues. Low complexity-rich tracts occupy residues 278-299 (ASPS…PTGS) and 387-402 (AGTG…ANGA). Composition is skewed to polar residues over residues 426 to 436 (SSETNGSSSQD) and 448 to 458 (ETSSTKDGSEN). Basic and acidic residues predominate over residues 487–499 (QPKEKGDSEEKRP). Residues 496–555 (EKRPRTAFSNAQLQRLKNEFNENRYLTEKRRQTLSAELGLNEAQIKIWFQNKRAKIKKSS) constitute a DNA-binding region (homeobox).

Belongs to the engrailed homeobox family.

It is found in the nucleus. Functionally, this protein specifies the body segmentation pattern. It is required for the development of the central nervous system. Transcriptional regulator that repress activated promoters. The sequence is that of Segmentation polarity homeobox protein engrailed (en) from Anopheles gambiae (African malaria mosquito).